Consider the following 233-residue polypeptide: uncharacterized protein (233 aa).

Positions K16 to K84 constitute an HTH gntR-type domain. The H-T-H motif DNA-binding region spans E44 to S63.

This is an uncharacterized protein from Bacillus subtilis (strain 168).